The sequence spans 227 residues: Large ribosomal subunit protein uL3 (227 aa).

The tract at residues 129-154 is disordered; the sequence is GMQPVSHGQSDRTRSRGSSGAQGPQK.

The protein belongs to the universal ribosomal protein uL3 family. In terms of assembly, part of the 50S ribosomal subunit. Forms a cluster with proteins L14 and L19.

One of the primary rRNA binding proteins, it binds directly near the 3'-end of the 23S rRNA, where it nucleates assembly of the 50S subunit. The chain is Large ribosomal subunit protein uL3 from Endomicrobium trichonymphae.